Here is a 162-residue protein sequence, read N- to C-terminus: 2-C-methyl-D-erythritol 2,4-cyclodiphosphate synthase (162 aa).

A divalent metal cation contacts are provided by D8 and H10. 4-CDP-2-C-methyl-D-erythritol 2-phosphate contacts are provided by residues 8–10 (DVH) and 36–37 (HS). Residue H44 coordinates a divalent metal cation. 4-CDP-2-C-methyl-D-erythritol 2-phosphate contacts are provided by residues 58 to 60 (DIG), 63 to 67 (FPDTD), 102 to 108 (AQAPKMA), 134 to 137 (TTTE), F141, and R144.

This sequence belongs to the IspF family. In terms of assembly, homotrimer. A divalent metal cation is required as a cofactor.

It carries out the reaction 4-CDP-2-C-methyl-D-erythritol 2-phosphate = 2-C-methyl-D-erythritol 2,4-cyclic diphosphate + CMP. It functions in the pathway isoprenoid biosynthesis; isopentenyl diphosphate biosynthesis via DXP pathway; isopentenyl diphosphate from 1-deoxy-D-xylulose 5-phosphate: step 4/6. In terms of biological role, involved in the biosynthesis of isopentenyl diphosphate (IPP) and dimethylallyl diphosphate (DMAPP), two major building blocks of isoprenoid compounds. Catalyzes the conversion of 4-diphosphocytidyl-2-C-methyl-D-erythritol 2-phosphate (CDP-ME2P) to 2-C-methyl-D-erythritol 2,4-cyclodiphosphate (ME-CPP) with a corresponding release of cytidine 5-monophosphate (CMP). This chain is 2-C-methyl-D-erythritol 2,4-cyclodiphosphate synthase, found in Yersinia pseudotuberculosis serotype IB (strain PB1/+).